Here is a 228-residue protein sequence, read N- to C-terminus: MPHAALSSLVLLSLATAIFADCPSSIWVQFQGSCYTFLQVTINVENIEDVRKQCTDHGADLVSIHNEEENAFILDTLQKRWKGPDDLLLGMFYDTDDASFKWFDQSNMTFDKWADEDGEDLVDTCGFLYAKTGEWRKGNCEMSSVTGTLCKTAIPYDKKYLSDNHILISTLVIASTVTLAVLGAVIWFLYRRSARSGFTSFSPAPQSPYSDGCALVVSEEDEYSVQLD.

The N-terminal stretch at Met1–Ala20 is a signal peptide. Over Asp21–His165 the chain is Extracellular. The region spanning Phe30 to Leu149 is the C-type lectin domain. N-linked (GlcNAc...) asparagine glycosylation occurs at Asn107. A disulfide bridge links Cys125 with Cys140. Residues Ile166–Ile186 traverse the membrane as a helical segment. The Cytoplasmic segment spans residues Trp187–Asp228.

It is found in the membrane. The protein resides in the cell projection. The protein localises to the filopodium. It localises to the cytoplasm. Its subcellular location is the cell cortex. It is found in the microvillus. Functionally, potential multifunctional C-type lectin receptor that may play roles in endocytosis and phagocytosis as well as in cell adhesion and migration. In Rattus norvegicus (Rat), this protein is CD302 antigen (Cd302).